We begin with the raw amino-acid sequence, 406 residues long: Argininosuccinate synthase (406 aa).

ATP contacts are provided by residues Ala-11–Ser-19 and Ala-38. 2 residues coordinate L-citrulline: Tyr-91 and Ser-96. Gly-121 is a binding site for ATP. Positions 123, 127, and 128 each coordinate L-aspartate. Residue Asn-127 participates in L-citrulline binding. L-citrulline is bound by residues Arg-131, Ser-181, Ser-190, Glu-266, and Tyr-278.

This sequence belongs to the argininosuccinate synthase family. Type 1 subfamily. In terms of assembly, homotetramer.

It is found in the cytoplasm. The enzyme catalyses L-citrulline + L-aspartate + ATP = 2-(N(omega)-L-arginino)succinate + AMP + diphosphate + H(+). Its pathway is amino-acid biosynthesis; L-arginine biosynthesis; L-arginine from L-ornithine and carbamoyl phosphate: step 2/3. The sequence is that of Argininosuccinate synthase from Campylobacter jejuni (strain RM1221).